We begin with the raw amino-acid sequence, 98 residues long: NADH-ubiquinone oxidoreductase chain 4L (98 aa).

The next 3 helical transmembrane spans lie at 1-21, 29-49, and 58-78; these read MPII…GMLI, SLLC…LMAL, and IVPI…LALL.

The protein belongs to the complex I subunit 4L family. As to quaternary structure, core subunit of respiratory chain NADH dehydrogenase (Complex I) which is composed of 45 different subunits.

It localises to the mitochondrion inner membrane. The enzyme catalyses a ubiquinone + NADH + 5 H(+)(in) = a ubiquinol + NAD(+) + 4 H(+)(out). In terms of biological role, core subunit of the mitochondrial membrane respiratory chain NADH dehydrogenase (Complex I) which catalyzes electron transfer from NADH through the respiratory chain, using ubiquinone as an electron acceptor. Part of the enzyme membrane arm which is embedded in the lipid bilayer and involved in proton translocation. The protein is NADH-ubiquinone oxidoreductase chain 4L (MT-ND4L) of Nasalis larvatus (Proboscis monkey).